The primary structure comprises 622 residues: Chaperone protein HscA homolog (622 aa).

This sequence belongs to the heat shock protein 70 family.

Functionally, chaperone involved in the maturation of iron-sulfur cluster-containing proteins. Has a low intrinsic ATPase activity which is markedly stimulated by HscB. In Aromatoleum aromaticum (strain DSM 19018 / LMG 30748 / EbN1) (Azoarcus sp. (strain EbN1)), this protein is Chaperone protein HscA homolog.